A 403-amino-acid polypeptide reads, in one-letter code: S-adenosylmethionine synthase (403 aa).

His15 provides a ligand contact to ATP. Position 17 (Asp17) interacts with Mg(2+). Glu43 provides a ligand contact to K(+). Glu56 and Gln99 together coordinate L-methionine. The tract at residues 99–109 (QSPDINQGVDR) is flexible loop. ATP contacts are provided by residues 166 to 168 (DAK), 232 to 233 (KF), Asp241, 247 to 248 (RK), Ala264, and Lys268. Asp241 is an L-methionine binding site. Lys272 contributes to the L-methionine binding site.

It belongs to the AdoMet synthase family. As to quaternary structure, homotetramer; dimer of dimers. Mg(2+) serves as cofactor. It depends on K(+) as a cofactor.

Its subcellular location is the cytoplasm. It catalyses the reaction L-methionine + ATP + H2O = S-adenosyl-L-methionine + phosphate + diphosphate. The protein operates within amino-acid biosynthesis; S-adenosyl-L-methionine biosynthesis; S-adenosyl-L-methionine from L-methionine: step 1/1. Functionally, catalyzes the formation of S-adenosylmethionine (AdoMet) from methionine and ATP. The overall synthetic reaction is composed of two sequential steps, AdoMet formation and the subsequent tripolyphosphate hydrolysis which occurs prior to release of AdoMet from the enzyme. The polypeptide is S-adenosylmethionine synthase (Xanthomonas campestris pv. campestris (strain ATCC 33913 / DSM 3586 / NCPPB 528 / LMG 568 / P 25)).